Here is a 206-residue protein sequence, read N- to C-terminus: MARYIGPKCKLARREGTDLFLKSGVRAIESKCNIEAAPGIHGQRRGRQSDYGTQLREKQKVRRIYGVLERQFSGYYKQAAGKKGATGENLLQLLECRLDNVVYRMGFGSTRAESRQLVSHKSISVNGQTVNVPSYQVRAGDVVAVREKAKNQLRIVQALDLCAQRGRVEWVEVDTEKKSGVFKNVPARSDLSADINESLIVELYSK.

In terms of domain architecture, S4 RNA-binding spans cysteine 96–valine 156.

It belongs to the universal ribosomal protein uS4 family. In terms of assembly, part of the 30S ribosomal subunit. Contacts protein S5. The interaction surface between S4 and S5 is involved in control of translational fidelity.

Its function is as follows. One of the primary rRNA binding proteins, it binds directly to 16S rRNA where it nucleates assembly of the body of the 30S subunit. In terms of biological role, with S5 and S12 plays an important role in translational accuracy. The polypeptide is Small ribosomal subunit protein uS4 (Pseudomonas fluorescens (strain ATCC BAA-477 / NRRL B-23932 / Pf-5)).